The following is a 224-amino-acid chain: Phosphoribosylformylglycinamidine synthase subunit PurQ (224 aa).

One can recognise a Glutamine amidotransferase type-1 domain in the interval 2-224 (TVAVVRFGGS…DGQGILGAFA (223 aa)). Catalysis depends on Cys85, which acts as the Nucleophile. Residues His202 and Glu204 contribute to the active site.

In terms of assembly, part of the FGAM synthase complex composed of 1 PurL, 1 PurQ and 2 PurS subunits.

It is found in the cytoplasm. The enzyme catalyses N(2)-formyl-N(1)-(5-phospho-beta-D-ribosyl)glycinamide + L-glutamine + ATP + H2O = 2-formamido-N(1)-(5-O-phospho-beta-D-ribosyl)acetamidine + L-glutamate + ADP + phosphate + H(+). It catalyses the reaction L-glutamine + H2O = L-glutamate + NH4(+). It participates in purine metabolism; IMP biosynthesis via de novo pathway; 5-amino-1-(5-phospho-D-ribosyl)imidazole from N(2)-formyl-N(1)-(5-phospho-D-ribosyl)glycinamide: step 1/2. Part of the phosphoribosylformylglycinamidine synthase complex involved in the purines biosynthetic pathway. Catalyzes the ATP-dependent conversion of formylglycinamide ribonucleotide (FGAR) and glutamine to yield formylglycinamidine ribonucleotide (FGAM) and glutamate. The FGAM synthase complex is composed of three subunits. PurQ produces an ammonia molecule by converting glutamine to glutamate. PurL transfers the ammonia molecule to FGAR to form FGAM in an ATP-dependent manner. PurS interacts with PurQ and PurL and is thought to assist in the transfer of the ammonia molecule from PurQ to PurL. The protein is Phosphoribosylformylglycinamidine synthase subunit PurQ of Halobacterium salinarum (strain ATCC 700922 / JCM 11081 / NRC-1) (Halobacterium halobium).